Consider the following 445-residue polypeptide: 3-phosphoshikimate 1-carboxyvinyltransferase (445 aa).

A disordered region spans residues 1-25; that stretch reads MTDSNQPTPLQARKSGALHGTARVP. Residues lysine 28, serine 29, and arginine 33 each coordinate 3-phosphoshikimate. Lysine 28 lines the phosphoenolpyruvate pocket. Residues glycine 101 and arginine 129 each coordinate phosphoenolpyruvate. Serine 175, glutamine 177, aspartate 328, and lysine 355 together coordinate 3-phosphoshikimate. Position 177 (glutamine 177) interacts with phosphoenolpyruvate. The active-site Proton acceptor is aspartate 328. Positions 359 and 402 each coordinate phosphoenolpyruvate.

It belongs to the EPSP synthase family. Monomer.

It localises to the cytoplasm. It catalyses the reaction 3-phosphoshikimate + phosphoenolpyruvate = 5-O-(1-carboxyvinyl)-3-phosphoshikimate + phosphate. The protein operates within metabolic intermediate biosynthesis; chorismate biosynthesis; chorismate from D-erythrose 4-phosphate and phosphoenolpyruvate: step 6/7. Catalyzes the transfer of the enolpyruvyl moiety of phosphoenolpyruvate (PEP) to the 5-hydroxyl of shikimate-3-phosphate (S3P) to produce enolpyruvyl shikimate-3-phosphate and inorganic phosphate. The sequence is that of 3-phosphoshikimate 1-carboxyvinyltransferase from Rhodopseudomonas palustris (strain TIE-1).